Here is a 325-residue protein sequence, read N- to C-terminus: DNA-directed RNA polymerase subunit alpha (325 aa).

The interval 1–231 (MQTSLLKPKI…DQLSVFAALE (231 aa)) is alpha N-terminal domain (alpha-NTD). Positions 246–325 (IDPILLRPVD…ENWPPAGLDK (80 aa)) are alpha C-terminal domain (alpha-CTD).

The protein belongs to the RNA polymerase alpha chain family. Homodimer. The RNAP catalytic core consists of 2 alpha, 1 beta, 1 beta' and 1 omega subunit. When a sigma factor is associated with the core the holoenzyme is formed, which can initiate transcription.

The catalysed reaction is RNA(n) + a ribonucleoside 5'-triphosphate = RNA(n+1) + diphosphate. Its function is as follows. DNA-dependent RNA polymerase catalyzes the transcription of DNA into RNA using the four ribonucleoside triphosphates as substrates. The polypeptide is DNA-directed RNA polymerase subunit alpha (Burkholderia thailandensis (strain ATCC 700388 / DSM 13276 / CCUG 48851 / CIP 106301 / E264)).